The chain runs to 181 residues: NAD(P)H-quinone oxidoreductase subunit 6, chloroplastic (181 aa).

5 helical membrane passes run 13 to 33 (PILY…VFFG), 35 to 55 (IIYS…LYLL), 64 to 84 (AQIL…IMLI), 98 to 118 (FGDI…IIMI), and 152 to 172 (LLPF…AITI).

It belongs to the complex I subunit 6 family. In terms of assembly, NDH is composed of at least 16 different subunits, 5 of which are encoded in the nucleus.

The protein resides in the plastid. The protein localises to the chloroplast thylakoid membrane. The catalysed reaction is a plastoquinone + NADH + (n+1) H(+)(in) = a plastoquinol + NAD(+) + n H(+)(out). It catalyses the reaction a plastoquinone + NADPH + (n+1) H(+)(in) = a plastoquinol + NADP(+) + n H(+)(out). Its function is as follows. NDH shuttles electrons from NAD(P)H:plastoquinone, via FMN and iron-sulfur (Fe-S) centers, to quinones in the photosynthetic chain and possibly in a chloroplast respiratory chain. The immediate electron acceptor for the enzyme in this species is believed to be plastoquinone. Couples the redox reaction to proton translocation, and thus conserves the redox energy in a proton gradient. This Staurastrum punctulatum (Green alga) protein is NAD(P)H-quinone oxidoreductase subunit 6, chloroplastic (ndhG).